The following is a 352-amino-acid chain: Holliday junction branch migration complex subunit RuvB (352 aa).

The large ATPase domain (RuvB-L) stretch occupies residues 4 to 185; sequence PDRLISAVSG…FGIVQRLEFY (182 aa). ATP contacts are provided by residues Ile-24, Arg-25, Gly-66, Lys-69, Thr-70, Thr-71, 132-134, Arg-175, Tyr-185, and Arg-222; that span reads EDF. Mg(2+) is bound at residue Thr-70. Residues 186 to 256 form a small ATPAse domain (RuvB-S) region; it reads NVEDLATIVS…IADKALNLLD (71 aa). A head domain (RuvB-H) region spans residues 259–352; that stretch reads ERGFDHLDRR…TDLFTSEDGN (94 aa). Arg-295, Arg-314, and Arg-319 together coordinate DNA.

It belongs to the RuvB family. As to quaternary structure, homohexamer. Forms an RuvA(8)-RuvB(12)-Holliday junction (HJ) complex. HJ DNA is sandwiched between 2 RuvA tetramers; dsDNA enters through RuvA and exits via RuvB. An RuvB hexamer assembles on each DNA strand where it exits the tetramer. Each RuvB hexamer is contacted by two RuvA subunits (via domain III) on 2 adjacent RuvB subunits; this complex drives branch migration. In the full resolvosome a probable DNA-RuvA(4)-RuvB(12)-RuvC(2) complex forms which resolves the HJ.

The protein localises to the cytoplasm. It carries out the reaction ATP + H2O = ADP + phosphate + H(+). Its function is as follows. The RuvA-RuvB-RuvC complex processes Holliday junction (HJ) DNA during genetic recombination and DNA repair, while the RuvA-RuvB complex plays an important role in the rescue of blocked DNA replication forks via replication fork reversal (RFR). RuvA specifically binds to HJ cruciform DNA, conferring on it an open structure. The RuvB hexamer acts as an ATP-dependent pump, pulling dsDNA into and through the RuvAB complex. RuvB forms 2 homohexamers on either side of HJ DNA bound by 1 or 2 RuvA tetramers; 4 subunits per hexamer contact DNA at a time. Coordinated motions by a converter formed by DNA-disengaged RuvB subunits stimulates ATP hydrolysis and nucleotide exchange. Immobilization of the converter enables RuvB to convert the ATP-contained energy into a lever motion, pulling 2 nucleotides of DNA out of the RuvA tetramer per ATP hydrolyzed, thus driving DNA branch migration. The RuvB motors rotate together with the DNA substrate, which together with the progressing nucleotide cycle form the mechanistic basis for DNA recombination by continuous HJ branch migration. Branch migration allows RuvC to scan DNA until it finds its consensus sequence, where it cleaves and resolves cruciform DNA. The protein is Holliday junction branch migration complex subunit RuvB of Pseudomonas aeruginosa (strain LESB58).